Reading from the N-terminus, the 874-residue chain is Alanine--tRNA ligase (874 aa).

Residues H563, H567, C665, and H669 each coordinate Zn(2+).

Belongs to the class-II aminoacyl-tRNA synthetase family. The cofactor is Zn(2+).

The protein localises to the cytoplasm. The enzyme catalyses tRNA(Ala) + L-alanine + ATP = L-alanyl-tRNA(Ala) + AMP + diphosphate. Functionally, catalyzes the attachment of alanine to tRNA(Ala) in a two-step reaction: alanine is first activated by ATP to form Ala-AMP and then transferred to the acceptor end of tRNA(Ala). Also edits incorrectly charged Ser-tRNA(Ala) and Gly-tRNA(Ala) via its editing domain. The chain is Alanine--tRNA ligase from Actinobacillus pleuropneumoniae serotype 7 (strain AP76).